A 269-amino-acid chain; its full sequence is Mitochondrial S-adenosylmethionine carrier protein (269 aa).

3 Solcar repeats span residues 4–77 (REFC…AKQL), 85–167 (LSPI…LKDL), and 176–264 (VDSW…VRTL). Helical transmembrane passes span 5–25 (EFCASLLAGGTAGMCVDLILF), 49–69 (IYAGVPSTAVGSFPNAAAFFV), 84–104 (YLSPIIHMAAASLGEVVACLI), 141–161 (RGYKSTVLREIPFSLVQFPLW), 181–201 (SAVCGAFAGGFAAALTTPLDV), and 237–257 (FAGVIPRMTAISLGGFIFLGA).

The protein belongs to the mitochondrial carrier (TC 2.A.29) family.

It localises to the mitochondrion inner membrane. The enzyme catalyses S-adenosyl-L-homocysteine(out) + S-adenosyl-L-methionine(in) = S-adenosyl-L-homocysteine(in) + S-adenosyl-L-methionine(out). Its function is as follows. Mitochondrial S-adenosyl-L-methionine/S-adenosyl-L-homocysteine antiporter. Mediates the exchange of cytosolic S-adenosyl-L-methionine, the predominant methyl-group donor for macromolecule methylation processes, for mitochondrial S-adenosylhomocysteine(SAH), a by-product of methylation reactions. The sequence is that of Mitochondrial S-adenosylmethionine carrier protein (slc25a26) from Xenopus tropicalis (Western clawed frog).